Consider the following 692-residue polypeptide: Elongation factor G 1 (692 aa).

Positions Glu8 to Val283 constitute a tr-type G domain. GTP-binding positions include Ala17–Thr24, Asp81–His85, and Asn135–Asp138.

Belongs to the TRAFAC class translation factor GTPase superfamily. Classic translation factor GTPase family. EF-G/EF-2 subfamily.

Its subcellular location is the cytoplasm. Functionally, catalyzes the GTP-dependent ribosomal translocation step during translation elongation. During this step, the ribosome changes from the pre-translocational (PRE) to the post-translocational (POST) state as the newly formed A-site-bound peptidyl-tRNA and P-site-bound deacylated tRNA move to the P and E sites, respectively. Catalyzes the coordinated movement of the two tRNA molecules, the mRNA and conformational changes in the ribosome. This Geobacter metallireducens (strain ATCC 53774 / DSM 7210 / GS-15) protein is Elongation factor G 1.